The sequence spans 257 residues: 3-deoxy-manno-octulosonate cytidylyltransferase (257 aa).

Belongs to the KdsB family.

Its subcellular location is the cytoplasm. The catalysed reaction is 3-deoxy-alpha-D-manno-oct-2-ulosonate + CTP = CMP-3-deoxy-beta-D-manno-octulosonate + diphosphate. Its pathway is nucleotide-sugar biosynthesis; CMP-3-deoxy-D-manno-octulosonate biosynthesis; CMP-3-deoxy-D-manno-octulosonate from 3-deoxy-D-manno-octulosonate and CTP: step 1/1. The protein operates within bacterial outer membrane biogenesis; lipopolysaccharide biosynthesis. Activates KDO (a required 8-carbon sugar) for incorporation into bacterial lipopolysaccharide in Gram-negative bacteria. The polypeptide is 3-deoxy-manno-octulosonate cytidylyltransferase (Xylella fastidiosa (strain M23)).